The following is a 224-amino-acid chain: Flagellar L-ring protein (224 aa).

Positions 1-15 (MRSLLFSLTALVLAG) are cleaved as a signal peptide. The N-palmitoyl cysteine moiety is linked to residue C16. A lipid anchor (S-diacylglycerol cysteine) is attached at C16.

The protein belongs to the FlgH family. In terms of assembly, the basal body constitutes a major portion of the flagellar organelle and consists of four rings (L,P,S, and M) mounted on a central rod.

It is found in the cell outer membrane. Its subcellular location is the bacterial flagellum basal body. In terms of biological role, assembles around the rod to form the L-ring and probably protects the motor/basal body from shearing forces during rotation. The chain is Flagellar L-ring protein from Idiomarina loihiensis (strain ATCC BAA-735 / DSM 15497 / L2-TR).